Reading from the N-terminus, the 144-residue chain is Large ribosomal subunit protein uL15 (144 aa).

The segment covering 1 to 10 has biased composition (polar residues); sequence MYLNTISPSR. Residues 1-51 are disordered; it reads MYLNTISPSRGSKHLSKRVGRGIGSGLGKTGGRGHKGQKSRSGGKVRLGFE. Residues 11–20 are compositionally biased toward basic residues; that stretch reads GSKHLSKRVG. A compositionally biased stretch (gly residues) spans 21–31; that stretch reads RGIGSGLGKTG. A compositionally biased stretch (basic residues) spans 32–44; that stretch reads GRGHKGQKSRSGG.

Belongs to the universal ribosomal protein uL15 family. Part of the 50S ribosomal subunit.

In terms of biological role, binds to the 23S rRNA. The sequence is that of Large ribosomal subunit protein uL15 from Blochmanniella pennsylvanica (strain BPEN).